A 340-amino-acid chain; its full sequence is Probable complex I intermediate-associated protein 30, mitochondrial (340 aa).

This sequence belongs to the CIA30 family.

It is found in the mitochondrion. Chaperone protein involved in the assembly of the mitochondrial NADH:ubiquinone oxidoreductase complex (complex I). Required for normal growth and reproduction. The protein is Probable complex I intermediate-associated protein 30, mitochondrial (nuaf-1) of Caenorhabditis briggsae.